The chain runs to 316 residues: Dof zinc finger protein DOF5.7 (316 aa).

A disordered region spans residues 1-42 (MSSHTNLPSPKPVPKPDHRISGTSQTKKPPSSSVAQDQQNLK). A compositionally biased stretch (polar residues) spans 21–42 (SGTSQTKKPPSSSVAQDQQNLK). The Dof-type zinc finger occupies 41-95 (LKCPRCNSPNTKFCYYNNYSLSQPRHFCKSCRRYWTRGGALRNVPIGGGCRKTKK). Residues Cys43, Cys46, Cys68, and Cys71 each contribute to the Zn(2+) site. Disordered stretches follow at residues 92 to 111 (KTKK…SSSS) and 257 to 294 (NSSS…NTGG). Positions 101–111 (SSMNTLPSSSS) are enriched in low complexity. A compositionally biased stretch (polar residues) spans 257–291 (NSSSPSSPTKKGDNQTEWYFGNNSDNEGVISNNAN).

The protein localises to the nucleus. In terms of biological role, transcription factor that binds specifically to a 5'-AA[AG]G-3' consensus core sequence. This chain is Dof zinc finger protein DOF5.7 (DOF5.7), found in Arabidopsis thaliana (Mouse-ear cress).